The primary structure comprises 292 residues: Phosphoribosylglycinamide formyltransferase, chloroplastic (292 aa).

The N-terminal 65 residues, 1–65, are a transit peptide targeting the chloroplast; it reads MESRVLFSSQ…KAASSTPQIV (65 aa). Position 88 to 90 (88 to 90) interacts with N(1)-(5-phospho-beta-D-ribosyl)glycinamide; that stretch reads GSN. (6R)-10-formyltetrahydrofolate contacts are provided by residues 167 to 170 and Asn-184; that span reads LKLI. His-186 acts as the Proton donor in catalysis. Asp-227 serves as a coordination point for (6R)-10-formyltetrahydrofolate. Glu-256 provides a ligand contact to N(1)-(5-phospho-beta-D-ribosyl)glycinamide.

The protein belongs to the GART family.

The protein localises to the plastid. Its subcellular location is the chloroplast. It catalyses the reaction N(1)-(5-phospho-beta-D-ribosyl)glycinamide + (6R)-10-formyltetrahydrofolate = N(2)-formyl-N(1)-(5-phospho-beta-D-ribosyl)glycinamide + (6S)-5,6,7,8-tetrahydrofolate + H(+). Its pathway is purine metabolism; IMP biosynthesis via de novo pathway; N(2)-formyl-N(1)-(5-phospho-D-ribosyl)glycinamide from N(1)-(5-phospho-D-ribosyl)glycinamide (10-formyl THF route): step 1/1. The polypeptide is Phosphoribosylglycinamide formyltransferase, chloroplastic (PUR3) (Arabidopsis thaliana (Mouse-ear cress)).